A 461-amino-acid polypeptide reads, in one-letter code: Fumarate hydratase class II (461 aa).

Substrate-binding positions include 97–99 (SGT), 127–130 (HPND), 137–139 (SSN), and T185. The active-site Proton donor/acceptor is the H186. S316 is an active-site residue. Substrate-binding positions include S317 and 322-324 (KVN).

The protein belongs to the class-II fumarase/aspartase family. Fumarase subfamily. In terms of assembly, homotetramer.

The protein localises to the cytoplasm. The enzyme catalyses (S)-malate = fumarate + H2O. The protein operates within carbohydrate metabolism; tricarboxylic acid cycle; (S)-malate from fumarate: step 1/1. Its function is as follows. Involved in the TCA cycle. Catalyzes the stereospecific interconversion of fumarate to L-malate. The chain is Fumarate hydratase class II from Staphylococcus aureus (strain MRSA252).